We begin with the raw amino-acid sequence, 553 residues long: Glucagon-like peptide 2 receptor (553 aa).

Residues 1-173 (MKLGSSRAGP…SFKQNVDRYA (173 aa)) lie on the Extracellular side of the membrane. Disulfide bonds link Cys83-Cys105, Cys96-Cys137, and Cys118-Cys159. N-linked (GlcNAc...) asparagine glycans are attached at residues Asn97, Asn113, Asn148, and Asn162. The chain crosses the membrane as a helical span at residues 174-198 (LLSTLQLMYTVGYSFSLISLFLALT). At 199 to 210 (LLLFLRKLHCTR) the chain is on the cytoplasmic side. A helical transmembrane segment spans residues 211-235 (NYIHMNLFASFILRTLAVLVKDVVF). At 236 to 261 (YNSYSKRPDNENGWMSYLSEMSTSCR) the chain is on the extracellular side. A helical transmembrane segment spans residues 262–285 (SVQVLLHYFVGANYLWLLVEGLYL). Residues 286-299 (HTLLEPTVLPERRL) are Cytoplasmic-facing. A helical transmembrane segment spans residues 300-321 (WPRYLLLGWAFPVLFVVPWGFA). Over 322–339 (RAHLENTGCWTTNGNKKI) the chain is Extracellular. The chain crosses the membrane as a helical span at residues 340 to 362 (WWIIRGPMMLCVTVNFFIFLKIL). Residues 363–386 (KLLISKLKAHQMCFRDYKYRLAKS) lie on the Cytoplasmic side of the membrane. A helical membrane pass occupies residues 387–405 (TLVLIPLLGVHEILFSFIT). Residues 406–417 (DDQVEGFAKLIR) lie on the Extracellular side of the membrane. The chain crosses the membrane as a helical span at residues 418–438 (LFIQLTLSSFHGFLVALQYGF). The Cytoplasmic portion of the chain corresponds to 439-550 (ANGEVKAELR…ANTMEEILEE (112 aa)).

It belongs to the G-protein coupled receptor 2 family.

The protein resides in the cell membrane. Its function is as follows. This is a receptor for glucagon-like peptide 2. The activity of this receptor is mediated by G proteins which activate adenylyl cyclase. The polypeptide is Glucagon-like peptide 2 receptor (GLP2R) (Homo sapiens (Human)).